The chain runs to 594 residues: MLPAQKHTLETLLENSVKQVVQASKGDADAAFVLPAIALERPKVAAHGDVACNVALQLAKPLGANPRQLAEQIVAALTAQPEAAGLVDAAEIAGPGFINLRLTPASKQAVIGAVLAQGRAFGASERDHGKRVLLEFVSANPTGPLHVGHGRQAALGDALANVLASQGYAVHREFYYNDAGVQIGNLAISTQARARGLKPGDAGWPEAAYNGEYIADIARDYLNGETVAASDGEPVTGKRDVEDLEAIRKFAVTYLRREQDMDLKAFGVKFDQYYLESSLYTEGRVEKTVDALIAAGMTYEQEGALWLRTTDEGDDKDRVMRKTDGTYTYFVPDVAYHVTKWERGFTKVINIQGSDHHGTIARVRAGLQGLHIGIPKGYPDYVLHKMVTVMRDGQEVKISKRAGSYVTVRDLIEWSGGATPGSEGSPELLDEATITRGRDAVRFFLISRKADTEFVFDIDLALKQNDENPVYYVQYAHARICSVINEWKSRYGATDALLPGADLSPLDSKQAMALMQKLAEYPDVLAHAAGELAPHAVAFYLRELASEFHSFYNAERVLVDEQAPRTARVALLAATRQVLENGLAMLGVSAPSKM.

The 'HIGH' region signature appears at 139-149; sequence ANPTGPLHVGH.

Belongs to the class-I aminoacyl-tRNA synthetase family. Monomer.

It is found in the cytoplasm. It catalyses the reaction tRNA(Arg) + L-arginine + ATP = L-arginyl-tRNA(Arg) + AMP + diphosphate. The polypeptide is Arginine--tRNA ligase (Burkholderia pseudomallei (strain 1106a)).